A 280-amino-acid polypeptide reads, in one-letter code: F-actin-capping protein subunit alpha (280 aa).

Belongs to the F-actin-capping protein alpha subunit family. In terms of assembly, heterodimer of an alpha and a beta subunit.

It localises to the cytoplasm. The protein localises to the cytoskeleton. In terms of biological role, F-actin-capping proteins bind in a Ca(2+)-independent manner to the fast growing ends of actin filaments (barbed end) thereby blocking the exchange of subunits at these ends. Unlike other capping proteins (such as gelsolin and severin), these proteins do not sever actin filaments. In Candida albicans (strain SC5314 / ATCC MYA-2876) (Yeast), this protein is F-actin-capping protein subunit alpha (CAP01).